A 377-amino-acid polypeptide reads, in one-letter code: MDLAPTSPQAQARALTVLGLESSCDETAAAILRREVDGSVTVLADRVLGQNDAHAPFGGVVPEIAARAHAEAMDGLVSQALAEAGLAVADLDGIAATSGPGLIGGVMAALMTAKGLALGAGKPLIAVNHLEGHALSPRISEPLAFPYLLLLVSGGHTQLLIAEGVGVYHRLGSTMDDAAGEAFDKTAKVMGLGFPGGPALERCAQSGDATRFALPVPLKGKPGCDFSFAGLKTAARQIWDGLDAPSDQDRADLSACVQAAIARALSSRTRRALAMFVDRFPDASRPMALVVAGGVAANKAVRAALEDEAAAAGFRLVAPPMKWCTDNAAMIALVGLEKLARGQIDGLDAPARARWPLDGAAAKSDPAIGSGRKGPKA.

Fe cation is bound by residues H129 and H133. Substrate contacts are provided by residues 151 to 155 (LVSGG), D184, G197, and N298. D326 serves as a coordination point for Fe cation. The disordered stretch occupies residues 358–377 (DGAAAKSDPAIGSGRKGPKA).

Belongs to the KAE1 / TsaD family. Fe(2+) serves as cofactor.

Its subcellular location is the cytoplasm. The catalysed reaction is L-threonylcarbamoyladenylate + adenosine(37) in tRNA = N(6)-L-threonylcarbamoyladenosine(37) in tRNA + AMP + H(+). Functionally, required for the formation of a threonylcarbamoyl group on adenosine at position 37 (t(6)A37) in tRNAs that read codons beginning with adenine. Is involved in the transfer of the threonylcarbamoyl moiety of threonylcarbamoyl-AMP (TC-AMP) to the N6 group of A37, together with TsaE and TsaB. TsaD likely plays a direct catalytic role in this reaction. The polypeptide is tRNA N6-adenosine threonylcarbamoyltransferase (Maricaulis maris (strain MCS10) (Caulobacter maris)).